A 250-amino-acid chain; its full sequence is N-acyl homoserine lactonase (250 aa).

Zn(2+) is bound by residues His-104, His-106, Asp-108, His-109, His-169, Asp-191, and His-235.

The protein belongs to the metallo-beta-lactamase superfamily. As to quaternary structure, monomer. Requires Zn(2+) as cofactor.

The enzyme catalyses an N-acyl-L-homoserine lactone + H2O = an N-acyl-L-homoserine + H(+). This chain is N-acyl homoserine lactonase, found in Bacillus cereus.